The chain runs to 94 residues: MPISTAEVEHVALLARLKLSPEEKTAYTEQLNAILEYMDKLNALDTRDVEPTAHVLPLRNVFRDDCARPGLPREKALQGAPEVSEGQFKVPRVV.

Residues 72–94 are disordered; that stretch reads PREKALQGAPEVSEGQFKVPRVV.

The protein belongs to the GatC family. In terms of assembly, heterotrimer of A, B and C subunits.

The catalysed reaction is L-glutamyl-tRNA(Gln) + L-glutamine + ATP + H2O = L-glutaminyl-tRNA(Gln) + L-glutamate + ADP + phosphate + H(+). It carries out the reaction L-aspartyl-tRNA(Asn) + L-glutamine + ATP + H2O = L-asparaginyl-tRNA(Asn) + L-glutamate + ADP + phosphate + 2 H(+). Its function is as follows. Allows the formation of correctly charged Asn-tRNA(Asn) or Gln-tRNA(Gln) through the transamidation of misacylated Asp-tRNA(Asn) or Glu-tRNA(Gln) in organisms which lack either or both of asparaginyl-tRNA or glutaminyl-tRNA synthetases. The reaction takes place in the presence of glutamine and ATP through an activated phospho-Asp-tRNA(Asn) or phospho-Glu-tRNA(Gln). The sequence is that of Aspartyl/glutamyl-tRNA(Asn/Gln) amidotransferase subunit C from Moorella thermoacetica (strain ATCC 39073 / JCM 9320).